A 694-amino-acid chain; its full sequence is MSDQEFGLDAIRNIGIMAHIDAGKTTTTERILFYAGRTHKIGEVHEGGATMDWMEQEQERGITITSAATTVFWLGAKINIIDTPGHVDFTIEVERSLRVLDGAVAVFDAVSGVEPQSETVWRQANKYGVPRIAFVNKMDRMGANYFGAVESMREKLGANAIPVHCPIGSESQFVGMVDLISQKALYFLEETLGAKWEERKIPEDLQEQCATLRMQLLEELATVDESNEAFMEKVLENPDSITEEEIHTVMRKGVIEGKINPVLCGSAFKNKGVQQLLDVIVKWLPSPLDRGNVRGINLKTGEEVSLKPSKDGPLAALAFKIMTDPYVGRITFIRIYSGTLKKGSAILNSTKDKKERISRLLEMHANERTDRDEFTVGDIGACVGLKFSVTGDTLCDENQEIVLERIEAPEPVIDMAIEPKSKGDREKLAQALSALSEEDPTFRVSTNEETGQTIISGMGELHLDILRDRMIREFRVEANVGKPQVSYKETITKTSNSETKYVKQSGGRGQYAHVCLEIEPNEPGKGNEVVSKIVGGVIPKEYIPAVIKGVEEGLNSGVLAGYGLVDVKVSIVFGSYHEVDSSEMAFKICGSMAVKEACRKALPVILEPIMKVTVITPEDHLGDVIGDLNRRRGKILGQESSRNMAQVSAEVPLSEMFGYMTSLRSLTSGRATSTMEPAFFAKVPQKIQEEIVKK.

The tr-type G domain occupies 9 to 288 (DAIRNIGIMA…VIVKWLPSPL (280 aa)). Residues 18–25 (AHIDAGKT), 82–86 (DTPGH), and 136–139 (NKMD) contribute to the GTP site.

Belongs to the TRAFAC class translation factor GTPase superfamily. Classic translation factor GTPase family. EF-G/EF-2 subfamily.

It is found in the cytoplasm. Its function is as follows. Catalyzes the GTP-dependent ribosomal translocation step during translation elongation. During this step, the ribosome changes from the pre-translocational (PRE) to the post-translocational (POST) state as the newly formed A-site-bound peptidyl-tRNA and P-site-bound deacylated tRNA move to the P and E sites, respectively. Catalyzes the coordinated movement of the two tRNA molecules, the mRNA and conformational changes in the ribosome. The protein is Elongation factor G of Chlamydia trachomatis serovar L2 (strain ATCC VR-902B / DSM 19102 / 434/Bu).